The following is a 131-amino-acid chain: D-ribose pyranase (131 aa).

His-20 acts as the Proton donor in catalysis. Residues Asp-28, His-98, and 120 to 122 (YAN) contribute to the substrate site.

This sequence belongs to the RbsD / FucU family. RbsD subfamily. In terms of assembly, homodecamer.

Its subcellular location is the cytoplasm. The enzyme catalyses beta-D-ribopyranose = beta-D-ribofuranose. It participates in carbohydrate metabolism; D-ribose degradation; D-ribose 5-phosphate from beta-D-ribopyranose: step 1/2. In terms of biological role, catalyzes the interconversion of beta-pyran and beta-furan forms of D-ribose. This chain is D-ribose pyranase, found in Bacillus cereus (strain AH187).